Reading from the N-terminus, the 176-residue chain is Oleosin Ara h 14.0101 (176 aa).

Ala-2 bears the N-acetylalanine; alternate mark. 2 helical membrane passes run 50-80 (IIAV…GLAI) and 95-117 (AVVT…LTGL). The interval 157 to 176 (TKDAGQQIQTKAQDVKRSSS) is disordered.

The protein belongs to the oleosin family. As to quaternary structure, homodimer. Forms oligomers. In terms of tissue distribution, expressed in seeds (at protein level). Not expressed in leaves.

It localises to the lipid droplet. The protein localises to the membrane. Functionally, may have a structural role to stabilize the lipid body during desiccation of the seed by preventing coalescence of the oil. Probably interacts with both lipid and phospholipid moieties of lipid bodies. May also provide recognition signals for specific lipase anchorage in lipolysis during seedling growth. The protein is Oleosin Ara h 14.0101 of Arachis hypogaea (Peanut).